The following is a 338-amino-acid chain: uncharacterized protein (338 aa).

Belongs to the MG032/MG096/MG288 family.

This is an uncharacterized protein from Mycoplasma pneumoniae (strain ATCC 29342 / M129 / Subtype 1) (Mycoplasmoides pneumoniae).